Consider the following 353-residue polypeptide: ATP-dependent kinase YFH7 (353 aa).

31 to 39 provides a ligand contact to ATP; that stretch reads GPPGSGKST.

The protein belongs to the YFH7 family.

Functionally, ATP-dependent kinase that could be involved in endoplasmic reticulum membrane assembly. This chain is ATP-dependent kinase YFH7 (YFH7), found in Kluyveromyces lactis (strain ATCC 8585 / CBS 2359 / DSM 70799 / NBRC 1267 / NRRL Y-1140 / WM37) (Yeast).